Consider the following 533-residue polypeptide: Berberine bridge enzyme-like 12 (533 aa).

The first 20 residues, 1–20 (MYLIFLLFFAASYSMSLSSA), serve as a signal peptide directing secretion. Cysteines 32 and 95 form a disulfide. Asparagine 35, asparagine 70, asparagine 133, asparagine 296, asparagine 412, and asparagine 417 each carry an N-linked (GlcNAc...) asparagine glycan. In terms of domain architecture, FAD-binding PCMH-type spans 73–249 (SMPKPSIIIV…LAFKVKLVTV (177 aa)). Positions 110–174 (HDYDGLSYVS…EVHAFPAGVC (65 aa)) form a cross-link, 6-(S-cysteinyl)-8alpha-(pros-histidyl)-FAD (His-Cys).

Belongs to the oxygen-dependent FAD-linked oxidoreductase family. FAD is required as a cofactor. In terms of processing, the FAD cofactor is bound via a bicovalent 6-S-cysteinyl, 8alpha-N1-histidyl FAD linkage.

The protein localises to the secreted. Its subcellular location is the cell wall. The polypeptide is Berberine bridge enzyme-like 12 (Arabidopsis thaliana (Mouse-ear cress)).